Here is a 284-residue protein sequence, read N- to C-terminus: Bifunctional protein FolD (284 aa).

NADP(+) is bound by residues 165–167 (GRS), serine 190, and valine 231.

The protein belongs to the tetrahydrofolate dehydrogenase/cyclohydrolase family. Homodimer.

It carries out the reaction (6R)-5,10-methylene-5,6,7,8-tetrahydrofolate + NADP(+) = (6R)-5,10-methenyltetrahydrofolate + NADPH. The catalysed reaction is (6R)-5,10-methenyltetrahydrofolate + H2O = (6R)-10-formyltetrahydrofolate + H(+). It functions in the pathway one-carbon metabolism; tetrahydrofolate interconversion. Its function is as follows. Catalyzes the oxidation of 5,10-methylenetetrahydrofolate to 5,10-methenyltetrahydrofolate and then the hydrolysis of 5,10-methenyltetrahydrofolate to 10-formyltetrahydrofolate. This chain is Bifunctional protein FolD, found in Brevibacillus brevis (strain 47 / JCM 6285 / NBRC 100599).